A 331-amino-acid polypeptide reads, in one-letter code: Protein mono-ADP-ribosyltransferase PARP11 (331 aa).

K11 carries the post-translational modification N6-(ADP-ribosyl)lysine. Residues 15-99 (SDVDDMDTSD…VTGKQRLIKR (85 aa)) enclose the WWE domain. An ADP-ribosylcysteine mark is found at C49 and C65. An ADP-ribosyl aspartic acid modification is found at D80. Residues 116 to 331 (IPMPTHWENV…IYPEYLIDFH (216 aa)) form the PARP catalytic domain.

The protein belongs to the ARTD/PARP family. Post-translationally, auto-mono-ADP-ribosylated. In terms of tissue distribution, predominantly expressed in testis, preferentially in postmeiotic germ cells. Also detectable in other tissues, including liver, lung, spleen, thymus and brain.

It localises to the nucleus. Its subcellular location is the nuclear pore complex. It carries out the reaction L-aspartyl-[protein] + NAD(+) = 4-O-(ADP-D-ribosyl)-L-aspartyl-[protein] + nicotinamide. The enzyme catalyses L-cysteinyl-[protein] + NAD(+) = S-(ADP-D-ribosyl)-L-cysteinyl-[protein] + nicotinamide + H(+). It catalyses the reaction L-glutamyl-[protein] + NAD(+) = 5-O-(ADP-D-ribosyl)-L-glutamyl-[protein] + nicotinamide. The catalysed reaction is L-lysyl-[protein] + NAD(+) = N(6)-(ADP-D-ribosyl)-L-lysyl-[protein] + nicotinamide + H(+). Functionally, mono-ADP-ribosyltransferase that mediates mono-ADP-ribosylation of target proteins. Plays a role in nuclear envelope stability and nuclear remodeling during spermiogenesis. Inhibits the type I interferon activated signaling pathway. Mechanistically, mono-ADP-ribosylates beta-TrCP/BTRC to promote IFNAR1 ubiquitination and protect BTRC from ubiquitin-proteasome degradation. The chain is Protein mono-ADP-ribosyltransferase PARP11 from Mus musculus (Mouse).